Reading from the N-terminus, the 540-residue chain is Chaperonin GroEL 4 (540 aa).

ATP contacts are provided by residues 29–32, 86–90, Gly-413, 477–479, and Asp-493; these read TLGP, DGTTT, and NAA.

The protein belongs to the chaperonin (HSP60) family. Forms a cylinder of 14 subunits composed of two heptameric rings stacked back-to-back. Interacts with the co-chaperonin GroES.

It localises to the cytoplasm. It catalyses the reaction ATP + H2O + a folded polypeptide = ADP + phosphate + an unfolded polypeptide.. Its function is as follows. Together with its co-chaperonin GroES, plays an essential role in assisting protein folding. The GroEL-GroES system forms a nano-cage that allows encapsulation of the non-native substrate proteins and provides a physical environment optimized to promote and accelerate protein folding. The protein is Chaperonin GroEL 4 of Frankia casuarinae (strain DSM 45818 / CECT 9043 / HFP020203 / CcI3).